Reading from the N-terminus, the 438-residue chain is V-type ATP synthase beta chain (438 aa).

This sequence belongs to the ATPase alpha/beta chains family.

Produces ATP from ADP in the presence of a proton gradient across the membrane. The V-type beta chain is a regulatory subunit. This chain is V-type ATP synthase beta chain, found in Chlamydia trachomatis serovar L2b (strain UCH-1/proctitis).